Reading from the N-terminus, the 721-residue chain is Ribonuclease R (721 aa).

The region spanning Arg249–Phe587 is the RNB domain. An S1 motif domain is found at Gly639 to Val719.

The protein belongs to the RNR ribonuclease family. RNase R subfamily.

The protein localises to the cytoplasm. The catalysed reaction is Exonucleolytic cleavage in the 3'- to 5'-direction to yield nucleoside 5'-phosphates.. 3'-5' exoribonuclease that releases 5'-nucleoside monophosphates and is involved in maturation of structured RNAs. This is Ribonuclease R from Ureaplasma parvum serovar 3 (strain ATCC 700970).